A 349-amino-acid chain; its full sequence is MPILKQLVSSSVNSKRRSRADLTAEMISAPLGDFRHTMHVGRAGDAFGDTSFLTSKAREADDESLDEQASASKLSLLSRKFRGSKRSQSVTRGDREQRDMLGSLRDSALFVKNAMSLPQLNEKEAAEKDSSKLPKSLSSSPVKKADARDGGPKSPHRNGATGPHSPDPLLDEQAFGDLMDLPIMPKVSYGLKHAESILSFHIDLGPSMLGDVLSIMDKDQWGSEEEEEAGGYRDKEGPSSIVQAPPVLEVVPPLGRQESKASWDQASMLPPHAVEDDGWAVVAPSPSSARSVGSHTTRDSSSLSSYTSGVLEERSPAFRGPDRVAAAPPRQPDKEFCFMDEEEEDEIRV.

K5 is modified (N6-methyllysine). S18 carries the post-translational modification Phosphoserine. The 15-residue stretch at 27–41 folds into the CRIB domain; the sequence is ISAPLGDFRHTMHVG. S64, S103, S107, and S116 each carry phosphoserine. A compositionally biased stretch (basic and acidic residues) spans 123-132; it reads KEAAEKDSSK. 3 disordered regions span residues 123–172, 220–240, and 278–349; these read KEAA…LLDE, QWGS…GPSS, and GWAV…EIRV. Residues S136, S138, S140, S154, S165, S223, S285, and S288 each carry the phosphoserine modification. Residues 280-308 show a composition bias toward low complexity; sequence AVVAPSPSSARSVGSHTTRDSSSLSSYTS. The segment covering 311-322 has biased composition (basic and acidic residues); sequence LEERSPAFRGPD. The segment covering 338–349 has biased composition (acidic residues); the sequence is FMDEEEEDEIRV.

The protein belongs to the BORG/CEP family. In terms of assembly, interacts with CDC42 and RHOQ, in a GTP-dependent manner. Ubiquitous.

It is found in the endomembrane system. It localises to the cytoplasm. Its subcellular location is the cytoskeleton. In terms of biological role, probably involved in the organization of the actin cytoskeleton. May act downstream of CDC42 to induce actin filament assembly leading to cell shape changes. Induces pseudopodia formation, when overexpressed in fibroblasts. This is Cdc42 effector protein 4 (Cdc42ep4) from Mus musculus (Mouse).